A 290-amino-acid chain; its full sequence is Pantothenate synthetase (290 aa).

M34–H41 provides a ligand contact to ATP. H41 functions as the Proton donor in the catalytic mechanism. Position 65 (Q65) interacts with (R)-pantoate. Q65 contacts beta-alanine. G156–D159 lines the ATP pocket. Q162 contacts (R)-pantoate. Residues A185 and L193 to R196 contribute to the ATP site.

The protein belongs to the pantothenate synthetase family. As to quaternary structure, homodimer.

The protein localises to the cytoplasm. It catalyses the reaction (R)-pantoate + beta-alanine + ATP = (R)-pantothenate + AMP + diphosphate + H(+). It participates in cofactor biosynthesis; (R)-pantothenate biosynthesis; (R)-pantothenate from (R)-pantoate and beta-alanine: step 1/1. In terms of biological role, catalyzes the condensation of pantoate with beta-alanine in an ATP-dependent reaction via a pantoyl-adenylate intermediate. This chain is Pantothenate synthetase, found in Acidovorax ebreus (strain TPSY) (Diaphorobacter sp. (strain TPSY)).